The primary structure comprises 470 residues: ATP synthase subunit beta (470 aa).

155 to 162 (GGAGVGKT) contacts ATP.

Belongs to the ATPase alpha/beta chains family. F-type ATPases have 2 components, CF(1) - the catalytic core - and CF(0) - the membrane proton channel. CF(1) has five subunits: alpha(3), beta(3), gamma(1), delta(1), epsilon(1). CF(0) has three main subunits: a(1), b(2) and c(9-12). The alpha and beta chains form an alternating ring which encloses part of the gamma chain. CF(1) is attached to CF(0) by a central stalk formed by the gamma and epsilon chains, while a peripheral stalk is formed by the delta and b chains.

It localises to the cell membrane. The enzyme catalyses ATP + H2O + 4 H(+)(in) = ADP + phosphate + 5 H(+)(out). Produces ATP from ADP in the presence of a proton gradient across the membrane. The catalytic sites are hosted primarily by the beta subunits. In Staphylococcus saprophyticus subsp. saprophyticus (strain ATCC 15305 / DSM 20229 / NCIMB 8711 / NCTC 7292 / S-41), this protein is ATP synthase subunit beta.